The following is a 430-amino-acid chain: Asparagine--tRNA ligase (430 aa).

The protein belongs to the class-II aminoacyl-tRNA synthetase family. As to quaternary structure, homodimer.

It is found in the cytoplasm. The catalysed reaction is tRNA(Asn) + L-asparagine + ATP = L-asparaginyl-tRNA(Asn) + AMP + diphosphate + H(+). The protein is Asparagine--tRNA ligase of Staphylococcus epidermidis (strain ATCC 35984 / DSM 28319 / BCRC 17069 / CCUG 31568 / BM 3577 / RP62A).